Here is a 486-residue protein sequence, read N- to C-terminus: Katanin p60 ATPase-containing subunit A1 (486 aa).

The tract at residues Arg103–Val174 is disordered. The segment covering Asn143–Val174 has biased composition (basic and acidic residues). Position 244-251 (Gly244–Thr251) interacts with ATP.

This sequence belongs to the AAA ATPase family. Katanin p60 subunit A1 subfamily. In terms of assembly, can homooligomerize into hexameric rings, which may be promoted by interaction with microtubules. Interacts with katnb1, which may serve as a targeting subunit.

It is found in the cytoplasm. It localises to the cytoskeleton. The protein resides in the microtubule organizing center. The protein localises to the centrosome. Its subcellular location is the spindle pole. It is found in the spindle. The catalysed reaction is n ATP + n H2O + a microtubule = n ADP + n phosphate + (n+1) alpha/beta tubulin heterodimers.. ATPase activity is stimulated by microtubules, which promote homooligomerization. ATP-dependent microtubule severing is stimulated by interaction with katnb1. In terms of biological role, catalytic subunit of a complex which severs microtubules in an ATP-dependent manner. Microtubule severing may promote rapid reorganization of cellular microtubule arrays and the release of microtubules from the centrosome following nucleation. This chain is Katanin p60 ATPase-containing subunit A1 (katna1), found in Salmo salar (Atlantic salmon).